We begin with the raw amino-acid sequence, 410 residues long: Porin-like protein GalP (410 aa).

The first 25 residues, 1 to 25 (MKCRTLYPLVPTFALAASLPLQALA), serve as a signal peptide directing secretion.

The protein belongs to the outer membrane porin (Opr) (TC 1.B.25) family.

In terms of biological role, probable transporter, possibly involved in the gallate degradation pathway. May play a role in the uptake of low gallate concentrations that may exist in the natural habitats of P.putida. The protein is Porin-like protein GalP (galP) of Pseudomonas putida (strain ATCC 47054 / DSM 6125 / CFBP 8728 / NCIMB 11950 / KT2440).